The sequence spans 144 residues: Fluoride-specific ion channel FluC 1 (144 aa).

A run of 4 helical transmembrane segments spans residues 11–31 (LIYI…YYLG), 44–64 (LATL…TTYI), 74–94 (VITG…TFSV), and 107–127 (IAFL…GLGY). Na(+)-binding residues include G84 and T87.

This sequence belongs to the fluoride channel Fluc/FEX (TC 1.A.43) family.

The protein localises to the cell membrane. It catalyses the reaction fluoride(in) = fluoride(out). With respect to regulation, na(+) is not transported, but it plays an essential structural role and its presence is essential for fluoride channel function. In terms of biological role, fluoride-specific ion channel. Important for reducing fluoride concentration in the cell, thus reducing its toxicity. This chain is Fluoride-specific ion channel FluC 1, found in Bacillus cereus (strain ATCC 14579 / DSM 31 / CCUG 7414 / JCM 2152 / NBRC 15305 / NCIMB 9373 / NCTC 2599 / NRRL B-3711).